The sequence spans 364 residues: tRNA/tmRNA (uracil-C(5))-methyltransferase (364 aa).

The S-adenosyl-L-methionine site is built by glutamine 188, tyrosine 216, asparagine 221, glutamate 237, and aspartate 297. Catalysis depends on cysteine 322, which acts as the Nucleophile. Glutamate 356 acts as the Proton acceptor in catalysis.

This sequence belongs to the class I-like SAM-binding methyltransferase superfamily. RNA M5U methyltransferase family. TrmA subfamily.

It carries out the reaction uridine(54) in tRNA + S-adenosyl-L-methionine = 5-methyluridine(54) in tRNA + S-adenosyl-L-homocysteine + H(+). The enzyme catalyses uridine(341) in tmRNA + S-adenosyl-L-methionine = 5-methyluridine(341) in tmRNA + S-adenosyl-L-homocysteine + H(+). Dual-specificity methyltransferase that catalyzes the formation of 5-methyluridine at position 54 (m5U54) in all tRNAs, and that of position 341 (m5U341) in tmRNA (transfer-mRNA). This Teredinibacter turnerae (strain ATCC 39867 / T7901) protein is tRNA/tmRNA (uracil-C(5))-methyltransferase.